Reading from the N-terminus, the 492-residue chain is Trigger factor (492 aa).

The PPIase FKBP-type domain maps to 164 to 249 (GDLVVVDFVG…VSDVRVPRKA (86 aa)). The segment at 440–492 (EAEEDSIGKHDHDHDHKEKASDKPKAKKAAAPKKKAAPKKKAAPKAEKKSSDE) is disordered. Basic and acidic residues predominate over residues 445 to 463 (SIGKHDHDHDHKEKASDKP). The span at 464-482 (KAKKAAAPKKKAAPKKKAA) shows a compositional bias: basic residues. Residues 483 to 492 (PKAEKKSSDE) show a composition bias toward basic and acidic residues.

Belongs to the FKBP-type PPIase family. Tig subfamily.

The protein localises to the cytoplasm. It carries out the reaction [protein]-peptidylproline (omega=180) = [protein]-peptidylproline (omega=0). Involved in protein export. Acts as a chaperone by maintaining the newly synthesized protein in an open conformation. Functions as a peptidyl-prolyl cis-trans isomerase. The polypeptide is Trigger factor (Zymomonas mobilis subsp. mobilis (strain ATCC 31821 / ZM4 / CP4)).